The primary structure comprises 515 residues: Methionine--tRNA ligase (515 aa).

Residues 13–23 carry the 'HIGH' region motif; it reads AYPNGKPHIGH. The short motif at 300–304 is the 'KMSKS' region element; that stretch reads KMSKS. Position 303 (Lys303) interacts with ATP.

It belongs to the class-I aminoacyl-tRNA synthetase family. MetG type 2B subfamily. Monomer.

The protein resides in the cytoplasm. The catalysed reaction is tRNA(Met) + L-methionine + ATP = L-methionyl-tRNA(Met) + AMP + diphosphate. In terms of biological role, is required not only for elongation of protein synthesis but also for the initiation of all mRNA translation through initiator tRNA(fMet) aminoacylation. The polypeptide is Methionine--tRNA ligase (Brucella melitensis biotype 1 (strain ATCC 23456 / CCUG 17765 / NCTC 10094 / 16M)).